We begin with the raw amino-acid sequence, 275 residues long: Vitamin B12-binding protein (275 aa).

The signal sequence occupies residues 1–19 (MMNKLCFALPLIFSDASFA). The region spanning 25-272 (RIISLAPHST…EVCEHFETVR (248 aa)) is the Fe/B12 periplasmic-binding domain. A disulfide bridge connects residues C185 and C265.

The protein belongs to the BtuF family. In terms of assembly, the complex is composed of two ATP-binding proteins (BtuD), two transmembrane proteins (BtuC) and a solute-binding protein (BtuF).

It is found in the periplasm. Part of the ABC transporter complex BtuCDF involved in vitamin B12 import. Binds vitamin B12 and delivers it to the periplasmic surface of BtuC. This chain is Vitamin B12-binding protein, found in Vibrio campbellii (strain ATCC BAA-1116).